The primary structure comprises 261 residues: Vacuolar protein sorting-associated protein 37D (261 aa).

Residues 93-182 (AENCADKLQR…RRRERSAQPA (90 aa)) enclose the VPS37 C-terminal domain. The segment at 172 to 261 (LRRRERSAQP…RPSQPEPPHR (90 aa)) is disordered. Positions 181–195 (PAPTTAAAAAAAATA) are enriched in low complexity. Pro residues-rich tracts occupy residues 215-224 (GPPPAVPRSL) and 231-261 (PVPP…PPHR).

This sequence belongs to the VPS37 family. In terms of assembly, component of the ESCRT-I complex (endosomal sorting complex required for transport I) which consists of TSG101, VPS28, a VPS37 protein (VPS37A to -D) and MVB12A or MVB12B in a 1:1:1:1 stoichiometry. Interacts with TSG101 and MVB12A. Component of the ESCRT-I complex (endosomal sorting complex required for transport I) which consists of TSG101, VPS28, a VPS37 protein (VPS37A to -D) and UBAP1 in a 1:1:1:1 stoichiometry.

The protein localises to the late endosome membrane. Functionally, component of the ESCRT-I complex, a regulator of vesicular trafficking process. Required for the sorting of endocytic ubiquitinated cargos into multivesicular bodies. May be involved in cell growth and differentiation. In Mus musculus (Mouse), this protein is Vacuolar protein sorting-associated protein 37D.